A 288-amino-acid chain; its full sequence is Movement protein (288 aa).

It belongs to the cucumovirus movement protein family.

It localises to the host cell junction. The protein resides in the host plasmodesma. In terms of biological role, transports viral genome to neighboring plant cells directly through plasmosdesmata, without any budding. The movement protein allows efficient cell to cell propagation, by bypassing the host cell wall barrier. Acts by forming a tubular structure at the host plasmodesmata, enlarging it enough to allow free passage of virion capsids. The protein is Movement protein of Apium graveolens (Celery).